Consider the following 484-residue polypeptide: MAQLNTNFINHIEKELPAHLSLQEFIAYCDKPLRKSIRVNTLKISTAQFVHIMTSAGWQLSPVPWCADGFWIEGKDDIQLGNAIEHIQGLFYIQEASSMLPPTALFSNDNTAEIVLDVASAPGSKATQIAALMNNSGLLVANEYSASRVKVLHANVLRMGASHTALTHFDGRVYGEYLYESFDAILLDAPCGGEGTVRKDPLALKHWDIDDVTAIGETQKDLIESAFLALKPGGILVYSTCTLSQLENQHICYHLQQTYPDAVEFESLAELFDGADKACTEEGFLHVWPQIYDSEGFFVAKIRKKASVERVKKQPKLQKNFPFNPANEKQKAELTQYFYDSFCLELPSDDVIMLRDDEYWLFPAQFMPFIGKMRFQRIGIKLADAMKKGYKAKHEAVIALSAATHNPAKTMELSAAQAQDFLMGRDIATSTFDQPTQQQLAIMPQGEMLVSYHKVVLGVVKHLGHRLKNNLPRDLVRDNVNLYL.

S-adenosyl-L-methionine-binding positions include Ala119–Lys125, Glu143, Asp170, and Asp188. The Nucleophile role is filled by Cys241.

This sequence belongs to the class I-like SAM-binding methyltransferase superfamily. RsmB/NOP family.

It localises to the cytoplasm. It catalyses the reaction cytidine(1407) in 16S rRNA + S-adenosyl-L-methionine = 5-methylcytidine(1407) in 16S rRNA + S-adenosyl-L-homocysteine + H(+). Functionally, specifically methylates the cytosine at position 1407 (m5C1407) of 16S rRNA. This Shewanella frigidimarina (strain NCIMB 400) protein is Ribosomal RNA small subunit methyltransferase F.